The sequence spans 505 residues: Probable alpha-L-arabinofuranosidase C (505 aa).

N-linked (GlcNAc...) asparagine glycosylation is found at N152, N181, and N269.

Belongs to the glycosyl hydrolase 51 family.

The protein localises to the secreted. It catalyses the reaction Hydrolysis of terminal non-reducing alpha-L-arabinofuranoside residues in alpha-L-arabinosides.. Its pathway is glycan metabolism; L-arabinan degradation. Functionally, alpha-L-arabinofuranosidase involved in the degradation of arabinoxylan, a major component of plant hemicellulose. Acts only on small linear 1,5-alpha-linked L-arabinofuranosyl oligosaccharides. The protein is Probable alpha-L-arabinofuranosidase C (abfC) of Aspergillus niger (strain ATCC MYA-4892 / CBS 513.88 / FGSC A1513).